Here is a 106-residue protein sequence, read N- to C-terminus: Large ribosomal subunit protein eL42 (106 aa).

The segment at 37 to 56 (SQGKRRYDRKQSGYGGQTKP) is disordered.

It belongs to the eukaryotic ribosomal protein eL42 family.

The chain is Large ribosomal subunit protein eL42 (RPL44) from Pichia kudriavzevii (Yeast).